A 138-amino-acid chain; its full sequence is Probable prefoldin subunit 4 (138 aa).

It belongs to the prefoldin subunit beta family. Heterohexamer of two PFD-alpha type and four PFD-beta type subunits.

Its function is as follows. Binds specifically to cytosolic chaperonin (c-CPN) and transfers target proteins to it. Binds to nascent polypeptide chain and promotes folding in an environment in which there are many competing pathways for nonnative proteins. This is Probable prefoldin subunit 4 from Drosophila melanogaster (Fruit fly).